Consider the following 427-residue polypeptide: Trigger factor (427 aa).

One can recognise a PPIase FKBP-type domain in the interval Gly163–Pro248.

Belongs to the FKBP-type PPIase family. Tig subfamily.

The protein resides in the cytoplasm. It carries out the reaction [protein]-peptidylproline (omega=180) = [protein]-peptidylproline (omega=0). In terms of biological role, involved in protein export. Acts as a chaperone by maintaining the newly synthesized protein in an open conformation. Functions as a peptidyl-prolyl cis-trans isomerase. The polypeptide is Trigger factor (Enterococcus faecalis (strain ATCC 700802 / V583)).